Consider the following 130-residue polypeptide: MANVQYYGTGRRKSSVARVRLVAGEGNILVNGRALENYFNYETLIRDVKQPLVLTGNENKYDVIVKVEGGGFTGQAGAIRHGISRALLKADLDLRPALKKEGFLTRDARMKERKKYGLKAARRAPQFSKR.

Belongs to the universal ribosomal protein uS9 family.

The sequence is that of Small ribosomal subunit protein uS9 from Clostridioides difficile (strain 630) (Peptoclostridium difficile).